A 630-amino-acid chain; its full sequence is A-type voltage-gated potassium channel KCND2 (630 aa).

Residues 1-184 (MAAGVAAWLP…FENPHTSTMA (184 aa)) lie on the Cytoplasmic side of the membrane. The segment at 2-20 (AAGVAAWLPFARAAAIGWM) is interaction with KCNIP1, KCNIP2, and other family members. Thr38 is modified (phosphothreonine). The tract at residues 71 to 90 (ERDFFYHPETQQYFFDRDPD) is interaction with KCNIP1. Zn(2+)-binding residues include His105, Cys111, Cys132, and Cys133. A helical transmembrane segment spans residues 185-206 (LVFYYVTGFFIAVSVIANVVET). Over 207–226 (VPCGSSPGHIKELPCGERYA) the chain is Extracellular. The helical transmembrane segment at 227-249 (VAFFCLDTACVMIFTVEYLLRLA) threads the bilayer. The Cytoplasmic segment spans residues 250–256 (AAPSRYR). The chain crosses the membrane as a helical span at residues 257–281 (FVRSVMSIIDVVAILPYYIGLVMTD). Residues 282 to 287 (NEDVSG) are Extracellular-facing. A helical; Voltage-sensor transmembrane segment spans residues 288-307 (AFVTLRVFRVFRIFKFSRHS). Residues 308-321 (QGLRILGYTLKSCA) lie on the Cytoplasmic side of the membrane. An S4-S5 linker region spans residues 308-321 (QGLRILGYTLKSCA). A helical transmembrane segment spans residues 322–345 (SELGFLLFSLTMAIIIFATVMFYA). Residues 346 to 357 (EKGSSASKFTSI) are Extracellular-facing. Positions 358–369 (PAAFWYTIVTMT) form an intramembrane region, helical. Residues Thr370, Leu371, Gly372, and Tyr373 each contribute to the K(+) site. A Selectivity filter motif is present at residues 370–375 (TLGYGD). An intramembrane segment occupies 370–377 (TLGYGDMV). The Extracellular portion of the chain corresponds to 378-380 (PKT). Residues 381-403 (IAGKIFGSICSLSGVLVIALPVP) form a helical membrane-spanning segment. The Cytoplasmic segment spans residues 404-630 (VIVSNFSRIY…GGNIVRVSAL (227 aa)). Ser438 carries the phosphoserine modification. Residues 474–489 (FETQHHHLLHCLEKTT) form a required for dendritic targeting region. Residues 474 to 630 (FETQHHHLLH…GGNIVRVSAL (157 aa)) are important for normal channel activation and inactivation, for interaction with KCNIP2, and probably other family members as well. Phosphoserine is present on residues Ser548, Ser552, Ser572, and Ser575. The interval 600 to 623 (IPTPPVTTPEGDDRPESPEYSGGN) is disordered. A phosphothreonine mark is found at Thr602 and Thr607. Ser616 bears the Phosphoserine mark. A PDZ-binding motif is present at residues 627–630 (VSAL).

This sequence belongs to the potassium channel family. D (Shal) (TC 1.A.1.2) subfamily. Kv4.2/KCND2 sub-subfamily. In terms of assembly, homotetramer or heterotetramer with KCND1 or KCND3. Associates with the regulatory subunits KCNIP2, KCNIP3 and KCNIP4. Interacts with the regulatory subunit KCNIP1; this interaction mediates the capture of both the N- and C-terminus of KCND2, preventing N-type inactivation and stabilizing the S6 conformation, thereby accelerating closed state inactivation and recovery. Interacts with DPP10, DLG4 and DLG1. In vivo, probably exists as heteromeric complex containing variable proportions of KCND1, KCND2, KCND3, KCNIP1, KCNIP2, KCNIP3, KCNIP4, DPP6 and DPP10. The tetrameric channel can associate with up to four regulatory subunits, such as KCNIP2 or KCNIP4. Interaction with KCNIP3 promotes tetramerization and formation of a functional potassium channel. Interaction with four KCNIP4 chains does not reduce interaction with DPP10. Probably part of a complex consisting of KCNIP1, KCNIP2 isoform 3 and KCND2. Interacts with FLNA and FLNC. Interacts with NCS1/FREQ. Identified in a complex with cAMP-dependent protein kinase (PKA), CAV3, AKAP6 and KCND3 in cardiac myocytes. Interacts (via S1 and S2 helices) with DPP6; this interaction stabilizes the conformation of the S1-S2 helices and facilitates S4 conformational change, including S4 sliding up and down, thereby accelerating activation, inactivation, and recovery. Phosphorylation at Ser-438 in response to MAPK activation is increased in stimulated dendrites. Interaction with KCNIP2 and DPP6 propomtes phosphorylation by PKA at Ser-552. Phosphorylation at Ser-552 has no effect on interaction with KCNIP3, but is required for the regulation of channel activity by KCNIP3. Phosphorylation at Ser-552 leads to KCND2 internalization. Phosphorylated by MAPK in response to signaling via the metabotropic glutamate receptor GRM5. Phosphorylation at Ser-616 is required for the down-regulation of neuronal A-type currents in response to signaling via GRM5. As to expression, detected in brain cortex, hippocampus, dentate gyrus, thalamus and cerebellum. Detected in neurons from the primary visual cortex. Detected in the supraoptic nucleus in hypothalamus, in hippocampus and the habenular nucleus of the thalamus. Detected in the bed nucleus of the stria terminalis. Detected in dendritic fields in the hippocampus CA1 layer, in stratum radiatum, stratum oriens, stratum lacunosum-moleculare and stratum pyramidale. Detected in dendritic fields in the hippocampus CA3 layer and in dentate gyrus. Detected in the cerebellum granule cell layer, where it localizes at synapses. Detected in the main olfactory bulb, especially in the granule cell layer and the external plexiform layer, but also the mitral layer. Detected in heart atrium and ventricle. Detected in heart left ventricle (at protein level). Highly expressed in heart and throughout the brain, with similar levels in cortex and hypothalamus, and much higher levels in hippocampus, dentate gyrus and the habenular nucleus of the thalamus. Detected in brain, and at lower levels in heart atrium and ventricle. Detected in neurons from the bed nucleus of the stria terminalis. Detected in aorta, cardiac and smooth muscle.

It is found in the cell membrane. The protein localises to the cell projection. The protein resides in the dendrite. It localises to the synapse. Its subcellular location is the perikaryon. It is found in the postsynaptic cell membrane. The protein localises to the dendritic spine. The protein resides in the sarcolemma. It localises to the cell junction. Its subcellular location is the membrane. It is found in the caveola. It catalyses the reaction K(+)(in) = K(+)(out). Its activity is regulated as follows. Inhibited by 5 mM 4-aminopyridine (4-AP). Not inhibited by dendrotoxins and by tetraethylammonium (TEA). Inhibited by 10 mM flecainide and 20 mM quinidine. Inhibited by the heteropodatoxins HpTx(1), HpTx(2), and HpTx(3). Functionally, voltage-gated potassium channel that mediates transmembrane potassium transport in excitable membranes, primarily in the brain, but also in rodent heart. Mediates the major part of the dendritic A-type current I(SA) in brain neurons. This current is activated at membrane potentials that are below the threshold for action potentials. It regulates neuronal excitability, prolongs the latency before the first spike in a series of action potentials, regulates the frequency of repetitive action potential firing, shortens the duration of action potentials and regulates the back-propagation of action potentials from the neuronal cell body to the dendrites. Contributes to the regulation of the circadian rhythm of action potential firing in suprachiasmatic nucleus neurons, which regulates the circadian rhythm of locomotor activity. Functions downstream of the metabotropic glutamate receptor GRM5 and plays a role in neuronal excitability and in nociception mediated by activation of GRM5. Mediates the transient outward current I(to) in rodent heart left ventricle apex cells, but not in human heart, where this current is mediated by another family member. Forms tetrameric potassium-selective channels through which potassium ions pass in accordance with their electrochemical gradient. The channel alternates between opened and closed conformations in response to the voltage difference across the membrane. Can form functional homotetrameric channels and heterotetrameric channels that contain variable proportions of KCND2 and KCND3; channel properties depend on the type of pore-forming alpha subunits that are part of the channel. In vivo, membranes probably contain a mixture of heteromeric potassium channel complexes. Interaction with specific isoforms of the regulatory subunits KCNIP1, KCNIP2, KCNIP3 or KCNIP4 strongly increases expression at the cell surface and thereby increases channel activity; it modulates the kinetics of channel activation and inactivation, shifts the threshold for channel activation to more negative voltage values, shifts the threshold for inactivation to less negative voltages and accelerates recovery after inactivation. Likewise, interaction with DPP6 or DPP10 promotes expression at the cell membrane and regulates both channel characteristics and activity. Upon depolarization, the channel goes from a resting closed state (C state) to an activated but non-conducting state (C* state), from there, the channel may either inactivate (I state) or open (O state). This chain is A-type voltage-gated potassium channel KCND2, found in Rattus norvegicus (Rat).